A 130-amino-acid polypeptide reads, in one-letter code: Small ribosomal subunit protein uS9 (130 aa).

This sequence belongs to the universal ribosomal protein uS9 family.

The polypeptide is Small ribosomal subunit protein uS9 (Vibrio cholerae serotype O1 (strain ATCC 39541 / Classical Ogawa 395 / O395)).